The chain runs to 245 residues: 2,3-bisphosphoglycerate-dependent phosphoglycerate mutase 1 (245 aa).

Substrate is bound by residues 8–15 (RHGQSLWN), 21–22 (TG), arginine 60, 87–90 (ERHY), lysine 98, 114–115 (RR), and 183–184 (GN). The active-site Tele-phosphohistidine intermediate is histidine 9. Residue glutamate 87 is the Proton donor/acceptor of the active site.

This sequence belongs to the phosphoglycerate mutase family. BPG-dependent PGAM subfamily.

The enzyme catalyses (2R)-2-phosphoglycerate = (2R)-3-phosphoglycerate. Its pathway is carbohydrate degradation; glycolysis; pyruvate from D-glyceraldehyde 3-phosphate: step 3/5. Catalyzes the interconversion of 2-phosphoglycerate and 3-phosphoglycerate. The sequence is that of 2,3-bisphosphoglycerate-dependent phosphoglycerate mutase 1 from Bacillus cereus (strain ATCC 10987 / NRS 248).